Consider the following 261-residue polypeptide: MFLRVIDFFQLHLRWYSVGLIFFSFIPIYYSIIVCQPQQFKIDGFELINPVFNKHHSTRSCTSATKSLQNGLIALFIFYALKIYKKVYLIVLYIILIIHFGFEIRNAKSETSRKYIAISTREMFMYYVELLLLYFQNLLLLPYICGGYFLIRHVHRIPSKEEVDRQTLKFKEEARRIKRLMIEEDWHVKEANEDVKNKIEQEGLKRKDMEFEEQLYHLRIEKVKRREQVLKQKLEEKKAKRRQNAERRKKRREIAMEQREQ.

The next 3 helical transmembrane spans lie at 15–35 (WYSVGLIFFSFIPIYYSIIVC), 87–107 (VYLIVLYIILIIHFGFEIRNA), and 131–151 (LLLYFQNLLLLPYICGGYFLI). Over residues 234–246 (LEEKKAKRRQNAE) the composition is skewed to basic and acidic residues. Positions 234–261 (LEEKKAKRRQNAERRKKRREIAMEQREQ) are disordered.

The protein localises to the membrane. This is an uncharacterized protein from Caenorhabditis elegans.